We begin with the raw amino-acid sequence, 306 residues long: Histone-lysine N-methyltransferase SETMAR (306 aa).

Residues 60-123 (PGCACLKTPC…RCRNRVVQWG (64 aa)) enclose the Pre-SET domain. Residues cysteine 62, cysteine 64, cysteine 69, cysteine 74, cysteine 76, cysteine 105, cysteine 109, cysteine 111, and cysteine 115 each contribute to the Zn(2+) site. The region spanning 126–250 (FHLQVFKTDH…PEEELSYDYS (125 aa)) is the SET domain. S-adenosyl-L-methionine contacts are provided by residues 136 to 138 (KGW), tyrosine 179, arginine 207, and 210 to 211 (NH). Zn(2+) is bound by residues cysteine 213, cysteine 274, cysteine 276, and cysteine 281. One can recognise a Post-SET domain in the interval 270–286 (LRKPCYCGARSCAAFLP).

Belongs to the class V-like SAM-binding methyltransferase superfamily.

The protein localises to the nucleus. Its subcellular location is the chromosome. It catalyses the reaction L-lysyl(36)-[histone H3] + 2 S-adenosyl-L-methionine = N(6),N(6)-dimethyl-L-lysyl(36)-[histone H3] + 2 S-adenosyl-L-homocysteine + 2 H(+). Histone methyltransferase that methylates 'Lys-4' and 'Lys-36' of histone H3, 2 specific tags for epigenetic transcriptional activation. Specifically mediates dimethylation of H3 'Lys-36'. The polypeptide is Histone-lysine N-methyltransferase SETMAR (Bos taurus (Bovine)).